The primary structure comprises 513 residues: Probable helicase MJ1565 (513 aa).

Residues Arg151, 160 to 165 (GMGKSN), and 467 to 468 (KV) contribute to the ATP site.

This sequence belongs to the HerA family.

It carries out the reaction Couples ATP hydrolysis with the unwinding of duplex DNA at the replication fork by translocating in the 5'-3' direction. This creates two antiparallel DNA single strands (ssDNA). The leading ssDNA polymer is the template for DNA polymerase III holoenzyme which synthesizes a continuous strand.. It catalyses the reaction ATP + H2O = ADP + phosphate + H(+). The catalysed reaction is Couples ATP hydrolysis with the unwinding of duplex DNA by translocating in the 3'-5' direction.. Its function is as follows. A probably bidirectional DNA helicase. This is Probable helicase MJ1565 from Methanocaldococcus jannaschii (strain ATCC 43067 / DSM 2661 / JAL-1 / JCM 10045 / NBRC 100440) (Methanococcus jannaschii).